We begin with the raw amino-acid sequence, 387 residues long: Phosphoglycerate kinase (387 aa).

Substrate-binding positions include 21–23 (DLN), arginine 36, 59–62 (HLGR), arginine 113, and arginine 146. ATP is bound by residues lysine 197, glutamate 314, and 340–343 (GGDT).

The protein belongs to the phosphoglycerate kinase family. Monomer.

The protein localises to the cytoplasm. It carries out the reaction (2R)-3-phosphoglycerate + ATP = (2R)-3-phospho-glyceroyl phosphate + ADP. Its pathway is carbohydrate degradation; glycolysis; pyruvate from D-glyceraldehyde 3-phosphate: step 2/5. The polypeptide is Phosphoglycerate kinase (Photorhabdus laumondii subsp. laumondii (strain DSM 15139 / CIP 105565 / TT01) (Photorhabdus luminescens subsp. laumondii)).